The primary structure comprises 452 residues: PHO85 cyclin CLG1 (452 aa).

Belongs to the cyclin family. PCL1,2 subfamily. In terms of assembly, forms a cyclin-CDK complex with PHO85.

Functionally, cyclin partner of the cyclin-dependent kinase (CDK) PHO85. Has a role in cell integrity and polarized cell growth together with the other PCL1/PCL2 cyclin family members. This chain is PHO85 cyclin CLG1 (CLG1), found in Saccharomyces cerevisiae (strain ATCC 204508 / S288c) (Baker's yeast).